The sequence spans 75 residues: Kappa-thalatoxin-Cad2a (75 aa).

Residues 1–22 (MKFQMIAAVLLIAFCLCVVVTA) form the signal peptide. Positions 23–40 (RMELQDVEDMKNGSFQKR) are excised as a propeptide. In terms of domain architecture, ShKT spans 43-75 (CIDTIPKSRCTAFQCKNSMKYRLSFCRKTCGTC). 3 disulfides stabilise this stretch: C43-C75, C52-C68, and C57-C72.

It belongs to the sea anemone type 1 potassium channel toxin family. Type 1a subfamily.

It is found in the secreted. The protein resides in the nematocyst. Functionally, inhibits voltage-gated potassium channels (Kv) with higher potency for Kv1.1/KCNA1 and Kv1.3/KCNA3. The chain is Kappa-thalatoxin-Cad2a from Cryptodendrum adhaesivum (Adhesive sea anemone).